The sequence spans 839 residues: Nucleoporin NIC96 (839 aa).

Residues Leu25–Asn60 form a leucine zipper-like heptad repeat, required for interaction with NSP1 region.

It belongs to the nucleoporin interacting component (NIC) family. As to quaternary structure, component of the nuclear pore complex (NPC). NPC constitutes the exclusive means of nucleocytoplasmic transport. NPCs allow the passive diffusion of ions and small molecules and the active, nuclear transport receptor-mediated bidirectional transport of macromolecules such as proteins, RNAs, ribonucleoparticles (RNPs), and ribosomal subunits across the nuclear envelope. Due to its 8-fold rotational symmetry, all subunits are present with 8 copies or multiples thereof. NIC96 is part of three NPC subcomplexes, interacting with NSP1 of the NUP57 subcomplex (NIC96, NSP1, NUP49, NUP57), with NUP120 of the NUP84 subcomplex (SEH1, NUP85, NUP120, NUP145C, SEC13, NUP84, NUP133), and with NUP53 of the NUP53-NUP59-NUP170 subcomplex. The interaction with NUP53 is cell cycle dependent. NIC96 is also associated with the distal ring of the nuclear basket and interacts here with MLP2, which forms together with MLP1 nuclear pore-attached intranuclear filaments.

The protein localises to the nucleus. It localises to the nuclear pore complex. Its subcellular location is the nucleus membrane. Functionally, functions as a component of the nuclear pore complex (NPC). NPC components, collectively referred to as nucleoporins (NUPs), can play the role of both NPC structural components and of docking or interaction partners for transiently associated nuclear transport factors. NIC96, which is localized to the core of the NPC and the distal ring of the nuclear basket, is required for de novo assembly of NPCs. It is involved in nuclear GSP1 import. This is Nucleoporin NIC96 (NIC96) from Saccharomyces cerevisiae (strain ATCC 204508 / S288c) (Baker's yeast).